The following is a 440-amino-acid chain: Cyclic dipeptide prenyltransferase (440 aa).

The segment at 1–33 (MDGEMTASPPDISACDTSAVDEQTGQSGQSQAP) is disordered. A compositionally biased stretch (polar residues) spans 20 to 32 (VDEQTGQSGQSQA). Residues Thr108 and Glu116 each contribute to the substrate site. Dimethylallyl diphosphate contacts are provided by Arg129, Lys219, and Tyr221. Phe223 is a binding site for substrate. Dimethylallyl diphosphate contacts are provided by Lys286, Tyr288, Tyr366, Tyr431, and Tyr435.

This sequence belongs to the tryptophan dimethylallyltransferase family.

It carries out the reaction harmol + dimethylallyl diphosphate = 6-(3-dimethylallyl)harmol + diphosphate. It catalyses the reaction an N-terminal L-tryptophanyl-L-alpha-aminoacyl-[peptide] + H2O = an N-terminal L-alpha-aminoacyl-[peptide] + L-tryptophan. The catalysed reaction is (R)-benzodiazepinedione + dimethylallyl diphosphate = (2S,3R,11R)-aszonalenin + diphosphate. The enzyme catalyses (S)-benzodiazepinedione + dimethylallyl diphosphate = (2S,3R,11S)-aszonalenin + diphosphate. Its function is as follows. Prenyltransferase that catalyzes reverse prenylation at position N-1 of tryptophan-containing cyclic dipeptides. Accepts only dimethylallyl diphosphate (DMAPP) as the prenyl donor but shows broad substrate specificities toward its aromatic substrates. Also shows tryptophan aminopeptidase activity with preference for linear peptides containing a tryptophanyl moiety at the N-terminus. The protein is Cyclic dipeptide prenyltransferase of Aspergillus fumigatus (Neosartorya fumigata).